The primary structure comprises 619 residues: Dihydroxy-acid dehydratase 1 (619 aa).

Residue aspartate 81 participates in Mg(2+) binding. [2Fe-2S] cluster is bound at residue cysteine 122. Residues aspartate 123 and lysine 124 each coordinate Mg(2+). Lysine 124 bears the N6-carboxylysine mark. [2Fe-2S] cluster is bound at residue cysteine 201. Glutamate 496 contributes to the Mg(2+) binding site. Serine 522 functions as the Proton acceptor in the catalytic mechanism.

This sequence belongs to the IlvD/Edd family. In terms of assembly, homodimer. Requires [2Fe-2S] cluster as cofactor. Mg(2+) serves as cofactor.

The catalysed reaction is (2R)-2,3-dihydroxy-3-methylbutanoate = 3-methyl-2-oxobutanoate + H2O. The enzyme catalyses (2R,3R)-2,3-dihydroxy-3-methylpentanoate = (S)-3-methyl-2-oxopentanoate + H2O. It functions in the pathway amino-acid biosynthesis; L-isoleucine biosynthesis; L-isoleucine from 2-oxobutanoate: step 3/4. It participates in amino-acid biosynthesis; L-valine biosynthesis; L-valine from pyruvate: step 3/4. Its function is as follows. Functions in the biosynthesis of branched-chain amino acids. Catalyzes the dehydration of (2R,3R)-2,3-dihydroxy-3-methylpentanoate (2,3-dihydroxy-3-methylvalerate) into 2-oxo-3-methylpentanoate (2-oxo-3-methylvalerate) and of (2R)-2,3-dihydroxy-3-methylbutanoate (2,3-dihydroxyisovalerate) into 2-oxo-3-methylbutanoate (2-oxoisovalerate), the penultimate precursor to L-isoleucine and L-valine, respectively. The sequence is that of Dihydroxy-acid dehydratase 1 from Burkholderia lata (strain ATCC 17760 / DSM 23089 / LMG 22485 / NCIMB 9086 / R18194 / 383).